Consider the following 330-residue polypeptide: uncharacterized protein (330 aa).

Residues leucine 4 to threonine 242 enclose the ABC transporter domain. Glycine 40–threonine 47 serves as a coordination point for ATP. Aspartate 210–glutamate 330 is a binding site for a nucleoside 3',5'-cyclic phosphate.

It belongs to the ABC transporter superfamily.

This is an uncharacterized protein from Mycobacterium bovis (strain ATCC BAA-935 / AF2122/97).